The chain runs to 406 residues: Lysosome-associated membrane glycoprotein 1 (406 aa).

The signal sequence occupies residues 1 to 24; sequence MAAPGARRPLLLLLLAGLAHGASA. Positions 25–188 are first lumenal domain; the sequence is LFEVKNNGTT…SKEETHCTQD (164 aa). At 25 to 370 the chain is on the lumenal side; sequence LFEVKNNGTT…VEECVQDGNN (346 aa). Residues Asn31, Asn52, Asn58, Asn70, Asn78, Asn97, Asn101, Asn115, Asn159, and Asn177 are each glycosylated (N-linked (GlcNAc...) asparagine). Cysteines 35 and 74 form a disulfide. A disulfide bridge connects residues Cys149 and Cys185. Residues 180-207 are disordered; that stretch reads KEETHCTQDGPSPTTGPPSPSPPLVPTN. The hinge stretch occupies residues 189–218; the sequence is GPSPTTGPPSPSPPLVPTNPTVSKYNVTGN. Over residues 193 to 205 the composition is skewed to pro residues; that stretch reads TTGPPSPSPPLVP. 4 N-linked (GlcNAc...) asparagine glycosylation sites follow: Asn214, Asn219, Asn232, and Asn240. Residues 219–370 form a second lumenal domain region; that stretch reads NGTCLLASMA…VEECVQDGNN (152 aa). A disulfide bridge links Cys222 with Cys259. Asn252 is a glycosylation site (N-linked (GlcNAc...) (high mannose) asparagine). Residues Asn282, Asn296, and Asn311 are each glycosylated (N-linked (GlcNAc...) asparagine). Cys327 and Cys364 are oxidised to a cystine. A helical transmembrane segment spans residues 371-394; it reads MLIPIAVGGALAGLVLIVLIAYLI. Topologically, residues 395 to 406 are cytoplasmic; it reads GRKRSHAGYQTI.

This sequence belongs to the LAMP family. As to quaternary structure, interacts with ABCB9; this interaction strongly stabilizes ABCB9 and protects ABCB9 against lysosomal degradation. Interacts with FURIN. Interacts with TMEM175; inhibiting the proton channel activity of TMEM175. In terms of processing, O- and N-glycosylated; some of the N-glycans attached to LAMP-1 are polylactosaminoglycans.

Its subcellular location is the lysosome membrane. The protein localises to the endosome membrane. The protein resides in the late endosome membrane. It is found in the cell membrane. It localises to the cytolytic granule membrane. Lysosomal membrane glycoprotein which plays an important role in lysosome biogenesis, lysosomal pH regulation, autophagy and cholesterol homeostasis. Acts as an important regulator of lysosomal lumen pH regulation by acting as a direct inhibitor of the proton channel TMEM175, facilitating lysosomal acidification for optimal hydrolase activity. Also plays an important role in NK-cells cytotoxicity. Mechanistically, participates in cytotoxic granule movement to the cell surface and perforin trafficking to the lytic granule. In addition, protects NK-cells from degranulation-associated damage induced by their own cytotoxic granule content. Presents carbohydrate ligands to selectins. Also implicated in tumor cell metastasis. The polypeptide is Lysosome-associated membrane glycoprotein 1 (Lamp1) (Mus musculus (Mouse)).